The primary structure comprises 253 residues: Zinc import ATP-binding protein ZnuC (253 aa).

In terms of domain architecture, ABC transporter spans 6–227; it reads VTLNKISVTF…FGNRGAEQLA (222 aa). 38 to 45 is a binding site for ATP; sequence GPNGAGKS.

The protein belongs to the ABC transporter superfamily. Zinc importer (TC 3.A.1.15.5) family. The complex is composed of two ATP-binding proteins (ZnuC), two transmembrane proteins (ZnuB) and a solute-binding protein (ZnuA).

Its subcellular location is the cell inner membrane. It carries out the reaction Zn(2+)(out) + ATP(in) + H2O(in) = Zn(2+)(in) + ADP(in) + phosphate(in) + H(+)(in). Functionally, part of the ABC transporter complex ZnuABC involved in zinc import. Responsible for energy coupling to the transport system. The chain is Zinc import ATP-binding protein ZnuC from Yersinia pseudotuberculosis serotype I (strain IP32953).